The sequence spans 176 residues: Large ribosomal subunit protein eL20 (176 aa).

A Glycyl lysine isopeptide (Lys-Gly) (interchain with G-Cter in SUMO2) cross-link involves residue K11. Y63 is modified (phosphotyrosine). Phosphoserine is present on S71. K76 bears the N6-succinyllysine mark. The residue at position 123 (S123) is a Phosphoserine. Residues K128 and K170 each participate in a glycyl lysine isopeptide (Lys-Gly) (interchain with G-Cter in SUMO2) cross-link.

This sequence belongs to the eukaryotic ribosomal protein eL20 family. In terms of assembly, component of the large ribosomal subunit. Binds IPO9 with high affinity.

Its subcellular location is the cytoplasm. Its function is as follows. Component of the large ribosomal subunit. The ribosome is a large ribonucleoprotein complex responsible for the synthesis of proteins in the cell. This chain is Large ribosomal subunit protein eL20 (RPL18A), found in Oryctolagus cuniculus (Rabbit).